A 302-amino-acid polypeptide reads, in one-letter code: Probable movement protein 4b (302 aa).

Its function is as follows. Transports viral genome to neighboring plant cells directly through plasmosdesmata, without any budding. The movement protein allows efficient cell to cell propagation, by bypassing the host cell wall barrier. The sequence is that of Probable movement protein 4b (4b) from Embergeria (Garden lettuce).